We begin with the raw amino-acid sequence, 489 residues long: Putative (R)-citramalate synthase CimA (489 aa).

In terms of domain architecture, Pyruvate carboxyltransferase spans 3-255; sequence VKILDTTLRD…KTKIKKERLY (253 aa).

The protein belongs to the alpha-IPM synthase/homocitrate synthase family. Homodimer.

The enzyme catalyses pyruvate + acetyl-CoA + H2O = (3R)-citramalate + CoA + H(+). The protein operates within amino-acid biosynthesis; L-isoleucine biosynthesis; 2-oxobutanoate from pyruvate: step 1/3. Its function is as follows. Catalyzes the condensation of pyruvate and acetyl-coenzyme A to form (R)-citramalate. In Archaeoglobus fulgidus (strain ATCC 49558 / DSM 4304 / JCM 9628 / NBRC 100126 / VC-16), this protein is Putative (R)-citramalate synthase CimA (cimA).